Here is a 643-residue protein sequence, read N- to C-terminus: Fructose-1,6-bisphosphatase class 3 (643 aa).

The protein belongs to the FBPase class 3 family. Mn(2+) is required as a cofactor.

It carries out the reaction beta-D-fructose 1,6-bisphosphate + H2O = beta-D-fructose 6-phosphate + phosphate. It participates in carbohydrate biosynthesis; gluconeogenesis. The sequence is that of Fructose-1,6-bisphosphatase class 3 from Streptococcus agalactiae serotype Ia (strain ATCC 27591 / A909 / CDC SS700).